Here is a 145-residue protein sequence, read N- to C-terminus: Maximins 3/H3 type 1 (145 aa).

The N-terminal stretch at 1–18 (MNFKYIVAVSFLIASAYA) is a signal peptide. Propeptides lie at residues 19–43 (RSVQNDEQSLSQRDVLEEEESLREI) and 74–124 (RIAE…KEKR). Position 144 is an isoleucine amide (isoleucine 144).

Belongs to the bombinin family. Expressed by the skin glands.

It is found in the secreted. Its function is as follows. Maximin-3 shows antibacterial activity against both Gram-positive and Gram-negative bacteria. It also shows antimicrobial activity against the fungus C.albicans, but not against A.flavus nor P.uticale. It has little hemolytic activity. It possess a significant cytotoxicity against tumor cell lines. It possess a significant anti-HIV activity. It shows high spermicidal activity. Functionally, maximin-H3 shows antibacterial activity against both Gram-positive and Gram-negative bacteria. It also shows antimicrobial activity against the fungus C.albicans. Shows strong hemolytic activity. In Bombina maxima (Giant fire-bellied toad), this protein is Maximins 3/H3 type 1.